The primary structure comprises 226 residues: Peroxynitrite isomerase (226 aa).

A GXWXGXG motif is present at residues 21-27; the sequence is GSWEGQG. A heme b-binding site is contributed by H191. The interval 201–226 is disordered; the sequence is SAAEGRLAPGAERPRGAGGRKQGEQS.

This sequence belongs to the nitrobindin family. In terms of assembly, homodimer. Heme b is required as a cofactor.

The enzyme catalyses peroxynitrite = nitrate. The protein operates within nitrogen metabolism. Functionally, heme-binding protein able to scavenge peroxynitrite and to protect free L-tyrosine against peroxynitrite-mediated nitration, by acting as a peroxynitrite isomerase that converts peroxynitrite to nitrate. Therefore, this protein likely plays a role in peroxynitrite sensing and in the detoxification of reactive nitrogen and oxygen species (RNS and ROS, respectively). Is able to bind nitric oxide (NO) in vitro, but may act as a sensor of peroxynitrite levels in vivo. The polypeptide is Peroxynitrite isomerase (Micrococcus luteus (strain ATCC 4698 / DSM 20030 / JCM 1464 / CCM 169 / CCUG 5858 / IAM 1056 / NBRC 3333 / NCIMB 9278 / NCTC 2665 / VKM Ac-2230) (Micrococcus lysodeikticus)).